The chain runs to 350 residues: Anthranilate phosphoribosyltransferase (350 aa).

5-phospho-alpha-D-ribose 1-diphosphate-binding positions include Gly94, 97 to 98 (GD), Thr102, 104 to 107 (NVST), 122 to 130 (KHGNRSVSS), and Ser134. Gly94 is a binding site for anthranilate. Ser106 contacts Mg(2+). Position 125 (Asn125) interacts with anthranilate. Arg180 contributes to the anthranilate binding site. 2 residues coordinate Mg(2+): Asp239 and Glu240.

Belongs to the anthranilate phosphoribosyltransferase family. Homodimer. Mg(2+) is required as a cofactor.

The catalysed reaction is N-(5-phospho-beta-D-ribosyl)anthranilate + diphosphate = 5-phospho-alpha-D-ribose 1-diphosphate + anthranilate. Its pathway is amino-acid biosynthesis; L-tryptophan biosynthesis; L-tryptophan from chorismate: step 2/5. In terms of biological role, catalyzes the transfer of the phosphoribosyl group of 5-phosphorylribose-1-pyrophosphate (PRPP) to anthranilate to yield N-(5'-phosphoribosyl)-anthranilate (PRA). This chain is Anthranilate phosphoribosyltransferase, found in Pelobacter propionicus (strain DSM 2379 / NBRC 103807 / OttBd1).